The primary structure comprises 280 residues: Shikimate dehydrogenase (NADP(+)) (280 aa).

Shikimate-binding positions include 20–22 (SRS) and T67. K71 serves as the catalytic Proton acceptor. D82 is a binding site for NADP(+). 2 residues coordinate shikimate: N91 and D106. NADP(+) contacts are provided by residues 131 to 135 (GAGGS) and L220. Y222 contributes to the shikimate binding site. NADP(+) is bound at residue G243.

This sequence belongs to the shikimate dehydrogenase family. In terms of assembly, homodimer.

It carries out the reaction shikimate + NADP(+) = 3-dehydroshikimate + NADPH + H(+). The protein operates within metabolic intermediate biosynthesis; chorismate biosynthesis; chorismate from D-erythrose 4-phosphate and phosphoenolpyruvate: step 4/7. In terms of biological role, involved in the biosynthesis of the chorismate, which leads to the biosynthesis of aromatic amino acids. Catalyzes the reversible NADPH linked reduction of 3-dehydroshikimate (DHSA) to yield shikimate (SA). This chain is Shikimate dehydrogenase (NADP(+)), found in Rhodopseudomonas palustris (strain HaA2).